The sequence spans 530 residues: Alkali-sensitive linkage protein 1 (530 aa).

An N-terminal signal peptide occupies residues Met1 to Ala18. N-linked (GlcNAc...) asparagine glycosylation is present at Asn55. Residues Ser69–Val90 are disordered. N-linked (GlcNAc...) asparagine glycans are attached at residues Asn120 and Asn128.

It is found in the endoplasmic reticulum. It localises to the golgi apparatus. Its subcellular location is the secreted. The protein resides in the cell wall. This chain is Alkali-sensitive linkage protein 1 (asl1), found in Schizosaccharomyces pombe (strain 972 / ATCC 24843) (Fission yeast).